A 144-amino-acid chain; its full sequence is Large ribosomal subunit protein uL15 (144 aa).

Residues 1–48 form a disordered region; the sequence is MQLNNLKPAAGSKHAKRRVGRGIGSGLGKTAGRGHKGQKSRSGGFHKV. A compositionally biased stretch (gly residues) spans 21-31; sequence RGIGSGLGKTA.

The protein belongs to the universal ribosomal protein uL15 family. In terms of assembly, part of the 50S ribosomal subunit.

Functionally, binds to the 23S rRNA. This chain is Large ribosomal subunit protein uL15, found in Cupriavidus pinatubonensis (strain JMP 134 / LMG 1197) (Cupriavidus necator (strain JMP 134)).